The following is a 422-amino-acid chain: Serine--tRNA ligase (422 aa).

Thr229–Glu231 serves as a coordination point for L-serine. Arg260–Glu262 contributes to the ATP binding site. Glu283 provides a ligand contact to L-serine. Glu347–Ser350 lines the ATP pocket. Position 383 (Ser383) interacts with L-serine.

This sequence belongs to the class-II aminoacyl-tRNA synthetase family. Type-1 seryl-tRNA synthetase subfamily. As to quaternary structure, homodimer. The tRNA molecule binds across the dimer.

The protein resides in the cytoplasm. The enzyme catalyses tRNA(Ser) + L-serine + ATP = L-seryl-tRNA(Ser) + AMP + diphosphate + H(+). It carries out the reaction tRNA(Sec) + L-serine + ATP = L-seryl-tRNA(Sec) + AMP + diphosphate + H(+). Its pathway is aminoacyl-tRNA biosynthesis; selenocysteinyl-tRNA(Sec) biosynthesis; L-seryl-tRNA(Sec) from L-serine and tRNA(Sec): step 1/1. In terms of biological role, catalyzes the attachment of serine to tRNA(Ser). Is also able to aminoacylate tRNA(Sec) with serine, to form the misacylated tRNA L-seryl-tRNA(Sec), which will be further converted into selenocysteinyl-tRNA(Sec). This Pelobacter propionicus (strain DSM 2379 / NBRC 103807 / OttBd1) protein is Serine--tRNA ligase.